A 131-amino-acid polypeptide reads, in one-letter code: Small ribosomal subunit protein uS8 (131 aa).

This sequence belongs to the universal ribosomal protein uS8 family. As to quaternary structure, part of the 30S ribosomal subunit. Contacts proteins S5 and S12.

In terms of biological role, one of the primary rRNA binding proteins, it binds directly to 16S rRNA central domain where it helps coordinate assembly of the platform of the 30S subunit. The chain is Small ribosomal subunit protein uS8 from Leptothrix cholodnii (strain ATCC 51168 / LMG 8142 / SP-6) (Leptothrix discophora (strain SP-6)).